Here is a 1605-residue protein sequence, read N- to C-terminus: Ribosome-binding protein 1 (1605 aa).

At 1-7 (MDIYDTQ) the chain is on the lumenal side. The chain crosses the membrane as a helical span at residues 8–28 (TLGVVVFGGFMVVSAIGIFLV). Over 29–1605 (STFSMKETSY…GSSSKEGTSV (1577 aa)) the chain is Cytoplasmic. A disordered region spans residues 44–88 (NQRKEMAKTHHQKGEKKKKEKTVEKKGKTKKKEEKPNGKIPEHDL). Positions 52–63 (THHQKGEKKKKE) are enriched in basic residues. Over residues 64–88 (KTVEKKGKTKKKEEKPNGKIPEHDL) the composition is skewed to basic and acidic residues. Ser111 bears the Phosphoserine mark. The interval 114 to 150 (SSVGHTPIATVPAMPQEKLASSPKDRKKKEKKVAKVE) is disordered. Lys148 participates in a covalent cross-link: Glycyl lysine isopeptide (Lys-Gly) (interchain with G-Cter in SUMO2). Ser159 and Ser165 each carry phosphoserine. The interval 172-849 (ATPKEVPMVA…PGPPDCDGPL (678 aa)) is disordered. A run of 61 repeats spans residues 196 to 205 (SQGKKGQGAQ), 206 to 215 (NQAKKGEGAQ), 216 to 225 (NQGKKGEGAQ), 226 to 235 (NQAKKGEGAQ), 236 to 245 (NQAKKGEGAQ), 246 to 255 (NQGKKGEGAQ), 256 to 265 (NQAKKGEGGQ), 266 to 275 (NQAKKGEGAQ), 276 to 285 (NQGKKGEGAQ), 286 to 295 (NQGKKGEGAQ), 296 to 305 (NQAKKGEGAQ), 306 to 315 (NQAKKGEGAQ), 316 to 325 (NQGKKGEGAQ), 326 to 335 (NQSKKGEGAQ), 336 to 345 (NQAKKGEGGQ), 346 to 355 (NQAKKGEGAQ), 356 to 365 (NQAKKGEGAQ), 366 to 375 (NQAKKGEGVQ), 376 to 385 (NQAKKGVEGA), 386 to 395 (QNQGKKGEAN), 396 to 405 (QNQAKKGEGG), 406 to 415 (QNQTKKGEGP), 416 to 425 (QNQGKKGEAA), 426 to 435 (QKQDKKIEGA), 436 to 445 (QNQGKKPEGT), 446 to 455 (SNQGKKGEGA), 456 to 465 (QNQGKKGEGA), 466 to 475 (QNQSKKGEGA), 476 to 485 (QNQAKKGEGG), 486 to 495 (QNQAKKGEGA), 496 to 505 (QNQAKKGEGA), 506 to 515 (QNQAKKGEGV), 516 to 525 (QNQAKKGVEG), 527 to 536 (QNQGKKGEAN), 537 to 546 (QNQAKKGEGG), 547 to 556 (QNQTKKGEGP), 557 to 566 (QNQGKKGEAA), 567 to 576 (QKQDKKIEGA), 577 to 586 (QNQGKKPEGT), 587 to 596 (SNQGKKGEGA), 597 to 606 (QNQGKKGEGA), 607 to 616 (QNQGKKGEGA), 617 to 626 (QNQGKKGEGA), 628 to 637 (NQGKKGEGAQ), 638 to 647 (NQGKKGEGAQ), 648 to 657 (NQGKKGEGAQ), 658 to 667 (NQGKKGEGPQ), 668 to 677 (NQAKKGEGAQ), 678 to 687 (NQGKKGEGAQ), 688 to 697 (NQGKKGEGAQ), 698 to 707 (NQGKKAEGVQ), 708 to 717 (SQSKKGEGTQ), 718 to 727 (NQGKKGDGNP), 729 to 738 (QGKKGEGASN), 739 to 748 (QNRKTDTVAN), 749 to 758 (QGTKQEGVSN), 759 to 768 (QVKKSEGSPN), 769 to 778 (QGKKAEGAPN), 779 to 788 (QGKKKDGSPS), 789 to 798 (QAKKVDAAAN), and 799 to 808 (QGKKSEMAPA). Residues 196–808 (SQGKKGQGAQ…QGKKSEMAPA (613 aa)) form a 61 X 10 AA tandem repeats of [NSQ]-[NKQVGA]-[GSAQKRT]-[ASGDTK]-[KGTQSAV]-[KGAED]-[EQVGIPTDMA]-[EGVAS]-[AGVPETNS]-[AQNGPTVS] region. Over residues 197–208 (QGKKGQGAQNQA) the composition is skewed to low complexity. 4 stretches are compositionally biased toward polar residues: residues 224–258 (AQNQAKKGEGAQNQAKKGEGAQNQGKKGEGAQNQA), 274–338 (AQNQ…QNQA), 354–378 (AQNQAKKGEGAQNQAKKGEGVQNQA), and 385–399 (AQNQGKKGEANQNQA). The span at 420 to 433 (KKGEAAQKQDKKIE) shows a compositional bias: basic and acidic residues. Composition is skewed to polar residues over residues 435–479 (AQNQ…QNQA), 495–519 (AQNQAKKGEGAQNQAKKGEGVQNQA), and 526–540 (AQNQGKKGEANQNQA). Over residues 561-574 (KKGEAAQKQDKKIE) the composition is skewed to basic and acidic residues. Composition is skewed to polar residues over residues 576 to 720 (AQNQ…QNQG) and 736 to 769 (ASNQNRKTDTVANQGTKQEGVSNQVKKSEGSPNQ). Residue Ser786 is modified to Phosphoserine. Polar residues predominate over residues 811-821 (QKASMVQSQEA). The residue at position 818 (Ser818) is a Phosphoserine. A Glycyl lysine isopeptide (Lys-Gly) (interchain with G-Cter in SUMO1) cross-link involves residue Lys823. Lys1135 bears the N6-acetyllysine mark. 2 positions are modified to phosphoserine: Ser1162 and Ser1178. 2 disordered regions span residues 1460–1481 (MRSHVEDGDVAGSPAVPPAEQD) and 1571–1605 (TTQEQLTKEKDTVKKLQEQLGKAEDGSSSKEGTSV). The segment covering 1576–1598 (LTKEKDTVKKLQEQLGKAEDGSS) has biased composition (basic and acidic residues).

Widely expressed.

The protein resides in the endoplasmic reticulum membrane. Acts as a ribosome receptor and mediates interaction between the ribosome and the endoplasmic reticulum membrane. This is Ribosome-binding protein 1 (Rrbp1) from Mus musculus (Mouse).